The following is a 241-amino-acid chain: 2-C-methyl-D-erythritol 4-phosphate cytidylyltransferase (241 aa).

It belongs to the IspD/TarI cytidylyltransferase family. IspD subfamily. As to quaternary structure, homodimer.

It catalyses the reaction 2-C-methyl-D-erythritol 4-phosphate + CTP + H(+) = 4-CDP-2-C-methyl-D-erythritol + diphosphate. The protein operates within isoprenoid biosynthesis; isopentenyl diphosphate biosynthesis via DXP pathway; isopentenyl diphosphate from 1-deoxy-D-xylulose 5-phosphate: step 2/6. Catalyzes the formation of 4-diphosphocytidyl-2-C-methyl-D-erythritol from CTP and 2-C-methyl-D-erythritol 4-phosphate (MEP). This Yersinia pseudotuberculosis serotype I (strain IP32953) protein is 2-C-methyl-D-erythritol 4-phosphate cytidylyltransferase.